The chain runs to 826 residues: Ribosome-releasing factor 2, mitochondrial (826 aa).

The N-terminal 44 residues, 1-44 (MIVRNLLGKNRLCCLQPKLLLSTLSQRPQLQLSLQLLCRATRLY), are a transit peptide targeting the mitochondrion. The tr-type G domain maps to 53-340 (PKTRNIGIIA…GITNYLPSPL (288 aa)). GTP-binding positions include 62–69 (AHIDAGKT), 126–130 (DTPGH), and 180–183 (NKMD).

This sequence belongs to the TRAFAC class translation factor GTPase superfamily. Classic translation factor GTPase family. EF-G/EF-2 subfamily.

The protein localises to the mitochondrion. In terms of biological role, mitochondrial GTPase that mediates the disassembly of ribosomes from messenger RNA at the termination of mitochondrial protein biosynthesis. Not involved in the GTP-dependent ribosomal translocation step during translation elongation. This chain is Ribosome-releasing factor 2, mitochondrial, found in Lodderomyces elongisporus (strain ATCC 11503 / CBS 2605 / JCM 1781 / NBRC 1676 / NRRL YB-4239) (Yeast).